The sequence spans 158 residues: SsrA-binding protein (158 aa).

Residues 131–158 (GKKTHDKRETEKKRDWNREKARLLRDRG) form a disordered region. The segment covering 136–158 (DKRETEKKRDWNREKARLLRDRG) has biased composition (basic and acidic residues).

It belongs to the SmpB family.

Its subcellular location is the cytoplasm. In terms of biological role, required for rescue of stalled ribosomes mediated by trans-translation. Binds to transfer-messenger RNA (tmRNA), required for stable association of tmRNA with ribosomes. tmRNA and SmpB together mimic tRNA shape, replacing the anticodon stem-loop with SmpB. tmRNA is encoded by the ssrA gene; the 2 termini fold to resemble tRNA(Ala) and it encodes a 'tag peptide', a short internal open reading frame. During trans-translation Ala-aminoacylated tmRNA acts like a tRNA, entering the A-site of stalled ribosomes, displacing the stalled mRNA. The ribosome then switches to translate the ORF on the tmRNA; the nascent peptide is terminated with the 'tag peptide' encoded by the tmRNA and targeted for degradation. The ribosome is freed to recommence translation, which seems to be the essential function of trans-translation. The protein is SsrA-binding protein of Brucella ovis (strain ATCC 25840 / 63/290 / NCTC 10512).